A 247-amino-acid chain; its full sequence is Homeobox-leucine zipper protein HOX15 (247 aa).

The segment at 1-44 is disordered; the sequence is MAQDDEDVGLALGLSLGSGGHRRQRESRDEAPSSAAASLLTLRL. Low complexity predominate over residues 32–44; sequence PSSAAASLLTLRL. The segment at residues 91-150 is a DNA-binding region (homeobox); it reads NSRKKLRLSKEQSALLEDRFKEHSTLNPKQKVALAKQLNLRPRQVEVWFQNRRARTKLKQ. Positions 149–193 are leucine-zipper; that stretch reads KQTEVDCELLKRCCETLTEENRRLHRELQQLRALTHSTAAGFFMA. Residues 221 to 247 form a disordered region; the sequence is SPTAAADRTNKPTAPHLFSPFAKSAAC.

This sequence belongs to the HD-ZIP homeobox family. Class II subfamily. Expressed in seedlings, stems, leaf blades and panicles.

It localises to the nucleus. Its function is as follows. Probable transcription factor. This chain is Homeobox-leucine zipper protein HOX15 (HOX15), found in Oryza sativa subsp. japonica (Rice).